The chain runs to 428 residues: Elongation factor 1-alpha (428 aa).

The 211-residue stretch at 5 to 215 (KPHINIVFIG…ALDQMPEPPK (211 aa)) folds into the tr-type G domain. The segment at 14–21 (GHVDHGKS) is G1. 14 to 21 (GHVDHGKS) provides a ligand contact to GTP. A Mg(2+)-binding site is contributed by S21. Positions 68-72 (GITID) are G2. Positions 89 to 92 (DAPG) are G3. GTP contacts are provided by residues 89–93 (DAPGH) and 144–147 (NKMD). Positions 144-147 (NKMD) are G4. Residues 181-183 (SAW) form a G5 region.

Belongs to the TRAFAC class translation factor GTPase superfamily. Classic translation factor GTPase family. EF-Tu/EF-1A subfamily.

The protein localises to the cytoplasm. The enzyme catalyses GTP + H2O = GDP + phosphate + H(+). GTP hydrolase that promotes the GTP-dependent binding of aminoacyl-tRNA to the A-site of ribosomes during protein biosynthesis. In Thermococcus celer, this protein is Elongation factor 1-alpha.